A 338-amino-acid polypeptide reads, in one-letter code: tRNA N6-adenosine threonylcarbamoyltransferase (338 aa).

The Fe cation site is built by His111 and His115. Substrate contacts are provided by residues 134–138, Asp167, Gly180, and Asn272; that span reads LVSGG. Asp300 is a Fe cation binding site.

This sequence belongs to the KAE1 / TsaD family. Fe(2+) is required as a cofactor.

The protein localises to the cytoplasm. The catalysed reaction is L-threonylcarbamoyladenylate + adenosine(37) in tRNA = N(6)-L-threonylcarbamoyladenosine(37) in tRNA + AMP + H(+). Functionally, required for the formation of a threonylcarbamoyl group on adenosine at position 37 (t(6)A37) in tRNAs that read codons beginning with adenine. Is involved in the transfer of the threonylcarbamoyl moiety of threonylcarbamoyl-AMP (TC-AMP) to the N6 group of A37, together with TsaE and TsaB. TsaD likely plays a direct catalytic role in this reaction. This is tRNA N6-adenosine threonylcarbamoyltransferase from Shewanella sp. (strain ANA-3).